Here is a 445-residue protein sequence, read N- to C-terminus: C4-dicarboxylate transport protein (445 aa).

A run of 8 helical transmembrane segments spans residues 24 to 44 (VLYVQVLFAIVVGVLVGWLSP), 62 to 82 (LIKMVIAPIIFCTVVSGIAHI), 105 to 125 (FALVLGLIVGNLFPVGHGLAA), 163 to 183 (GDILQVLLFAVLFGFALMALG), 201 to 221 (FGVIAIVMKAAPIGAFGAMAF), 234 to 254 (LIGLVALFYATSALFVVLVLG), 322 to 342 (IYMTLATLFIAQALGIELSFG), and 370 to 390 (AGTLAAVNPALVPGMAIVFSI).

It belongs to the dicarboxylate/amino acid:cation symporter (DAACS) (TC 2.A.23) family.

The protein resides in the cell inner membrane. Its function is as follows. Responsible for the transport of dicarboxylates such as succinate, fumarate, and malate from the periplasm across the membrane. The chain is C4-dicarboxylate transport protein from Rhodopseudomonas palustris (strain ATCC BAA-98 / CGA009).